The chain runs to 187 residues: Dihydrofolate reductase (187 aa).

The DHFR domain occupies 4–185 (PLNCIVAVSQ…IKYKFEVYEK (182 aa)). The segment at 8 to 37 (IVAVSQNMGIGKNGDFPWPMLRNEFKYFQR) is involved in methotrexate binding. NADP(+)-binding positions include alanine 10 and 16–22 (GIGKNGD). Residue 31–36 (EFKYFQ) participates in substrate binding. An N6-acetyllysine; alternate modification is found at lysine 33. Lysine 33 is subject to N6-succinyllysine; alternate. An NADP(+)-binding site is contributed by 55–57 (RKT). Residues 60-70 (SIPEKNRPLKD) are involved in methotrexate binding. Arginine 71 serves as a coordination point for substrate. NADP(+) is bound by residues 77–79 (SRE) and 117–124 (GGSSVYKE). Threonine 137 serves as a coordination point for methotrexate.

This sequence belongs to the dihydrofolate reductase family. In terms of assembly, homodimer.

It is found in the mitochondrion. The protein localises to the cytoplasm. It catalyses the reaction (6S)-5,6,7,8-tetrahydrofolate + NADP(+) = 7,8-dihydrofolate + NADPH + H(+). The protein operates within cofactor biosynthesis; tetrahydrofolate biosynthesis; 5,6,7,8-tetrahydrofolate from 7,8-dihydrofolate: step 1/1. Key enzyme in folate metabolism. Contributes to the de novo mitochondrial thymidylate biosynthesis pathway. Catalyzes an essential reaction for de novo glycine and purine synthesis, and for DNA precursor synthesis. Binds its own mRNA. The polypeptide is Dihydrofolate reductase (DHFR) (Mesocricetus auratus (Golden hamster)).